The chain runs to 472 residues: Alanine--anticapsin ligase (472 aa).

E109 lines the Mg(2+) pocket. ATP contacts are provided by K138 and K178. The ATP-grasp domain occupies 142 to 355 (RDAFNKAGVK…MAQLLLDVLC (214 aa)). L182 contacts Mg(2+). ATP contacts are provided by residues 184 to 185 (SS), 226 to 229 (EEFL), and Q268. Substrate contacts are provided by residues E273 and 309–311 (HTE). Residues E311 and E324 each contribute to the Mg(2+) site. 328–331 (RFAG) is a substrate binding site.

As to quaternary structure, monomer or homodimer. Requires Mg(2+) as cofactor.

The catalysed reaction is L-anticapsin + L-alanine + ATP = bacilysin + ADP + phosphate + H(+). It participates in antibiotic biosynthesis; bacilysin biosynthesis. In terms of biological role, part of the bacABCDEFG operon responsible for the biosynthesis of bacilysin, an irreversible inactivator of the glutaminase domain of glucosamine synthetase. Catalyzes the formation of alpha-dipeptides from various L-amino acids in the presence of ATP. In vivo catalyzes the ligation of L-alanine and L-anticapsin (epoxycyclohexanonyl-Ala) to produce the final bacilysin antibiotic (L-Ala-L-4S-cyclohexenonyl-Ala dipeptide). The substrate specificity is restricted to small amino acids such as L-Ala, for the N-terminal end of the dipeptide, whereas a wide range of hydrophobic amino acids such as L-Phe, L-Tyr and L-Met are recognized for the C-terminal end. This chain is Alanine--anticapsin ligase, found in Bacillus subtilis (strain 168).